The chain runs to 154 residues: Keratin-associated protein 9-9 (154 aa).

A run of 14 repeats spans residues 8–12 (CCQPT), 13–17 (CCRTT), 18–22 (CCRTT), 37–41 (CCQPS), 42–46 (CCVSS), 51–55 (CCRPA), 56–60 (CCQNT), 61–65 (CCRTT), 66–70 (CCQPT), 75–79 (CCGQT), 124–128 (CCRPA), 129–133 (CCETT), 134–137 (CCRT), and 148–152 (CCQPS). Residues 8–152 (CCQPTCCRTT…TCVSSCCQPS (145 aa)) form a 14 X 5 AA repeats of C-C-[RQVGE]-[SPSTNQ]-[TASL] region.

Belongs to the KRTAP type 9 family. In terms of assembly, interacts with hair keratins.

In the hair cortex, hair keratin intermediate filaments are embedded in an interfilamentous matrix, consisting of hair keratin-associated proteins (KRTAP), which are essential for the formation of a rigid and resistant hair shaft through their extensive disulfide bond cross-linking with abundant cysteine residues of hair keratins. The matrix proteins include the high-sulfur and high-glycine-tyrosine keratins. This Homo sapiens (Human) protein is Keratin-associated protein 9-9 (KRTAP9-9).